Consider the following 697-residue polypeptide: Hormonally up-regulated neu tumor-associated kinase homolog (697 aa).

Residues 55-313 (YLIGRKLGEG…IQQALANRWL (259 aa)) enclose the Protein kinase domain. ATP is bound by residues 61–69 (LGEGSFAKV) and Lys84. The active-site Proton acceptor is the Asp179. Basic and acidic residues-rich tracts occupy residues 405 to 424 (KMNK…KRGE) and 460 to 473 (PVKE…ERES). Disordered stretches follow at residues 405 to 480 (KMNK…LSPF) and 586 to 642 (DNTS…NCVR). Over residues 586–600 (DNTSPIKGHSNQASF) the composition is skewed to polar residues. The segment covering 607–626 (SPSSPESMSPTSPHSPHSPS) has biased composition (low complexity). Residues 627–637 (CNNNISGNLGS) are compositionally biased toward polar residues.

This sequence belongs to the protein kinase superfamily. CAMK Ser/Thr protein kinase family. SNF1 subfamily.

It catalyses the reaction L-seryl-[protein] + ATP = O-phospho-L-seryl-[protein] + ADP + H(+). The catalysed reaction is L-threonyl-[protein] + ATP = O-phospho-L-threonyl-[protein] + ADP + H(+). The protein is Hormonally up-regulated neu tumor-associated kinase homolog (hunk) of Xenopus tropicalis (Western clawed frog).